The chain runs to 613 residues: Glutaminase 1 (613 aa).

Residues 33–315 are glutaminase; sequence GAVADYIPEL…LSSHYDLHML (283 aa). Substrate is bound by residues S75, N124, E168, N175, Y199, Y251, and V269. An STAS domain is found at 345-457; the sequence is REILAAHEQE…LDTAIEWAED (113 aa). 480 to 595 provides a ligand contact to a nucleoside 3',5'-cyclic phosphate; that stretch reads LLEGLSADEL…ERIMRNLAQL (116 aa).

The protein belongs to the glutaminase family. As to quaternary structure, homotetramer.

The catalysed reaction is L-glutamine + H2O = L-glutamate + NH4(+). This chain is Glutaminase 1 (glsA1), found in Bradyrhizobium diazoefficiens (strain JCM 10833 / BCRC 13528 / IAM 13628 / NBRC 14792 / USDA 110).